A 555-amino-acid chain; its full sequence is Transmembrane protein 87B (555 aa).

An N-terminal signal peptide occupies residues 1 to 42; sequence MAAACRSEAGLLPSLLCRRPAGAQLLRVALCLLCWVPAAVDA. Residues 43 to 216 are Lumenal-facing; sequence VPELGLWTRT…HGYISASDWP (174 aa). N-linked (GlcNAc...) asparagine glycans are attached at residues Asn68, Asn160, and Asn198. A helical membrane pass occupies residues 217–237; the sequence is LMIFYMVMCIVYILYGVLWLL. Topologically, residues 238–248 are cytoplasmic; it reads WSACYWKDILR. The helical transmembrane segment at 249–269 threads the bilayer; the sequence is IQFWIAAVIFLGMLEKAVFYS. The Lumenal portion of the chain corresponds to 270-300; it reads EYQNINSTGLSTQGLLIFAELISAVKRTLAR. Asn275 carries an N-linked (GlcNAc...) asparagine glycan. A helical membrane pass occupies residues 301-321; it reads LLVIIVSLGYGIVKPRLGTVM. At 322–323 the chain is on the cytoplasmic side; it reads HR. Residues 324–344 traverse the membrane as a helical segment; the sequence is VIGLGLLYLIFAAIEGVMRVI. Over 345-351 the chain is Lumenal; it reads GGSKHLA. The helical transmembrane segment at 352–372 threads the bilayer; that stretch reads VVLTDIVLAVIDSIFVWFIFI. At 373 to 394 the chain is on the cytoplasmic side; the sequence is SLAQTMKTLRLRKNTVKFSLYR. A helical membrane pass occupies residues 395 to 415; sequence HFTNTLIFAVLASIVFMVWTT. The Lumenal portion of the chain corresponds to 416 to 429; it reads KTFRIAKCQSDWME. A helical transmembrane segment spans residues 430–450; the sequence is LWVDDAFWSFLFSVILIVIMF. At 451 to 555 the chain is on the cytoplasmic side; sequence LWRPSANNQR…EKMFSSEKIM (105 aa). A phosphoserine mark is found at Ser470, Ser497, and Ser534.

The protein belongs to the LU7TM family. TMEM87 subfamily.

The protein resides in the golgi apparatus membrane. In terms of biological role, may be involved in retrograde transport from endosomes to the trans-Golgi network (TGN). This chain is Transmembrane protein 87B, found in Mus musculus (Mouse).